The following is a 138-amino-acid chain: Putative nickel-responsive regulator (138 aa).

Residues H78, H89, H91, and C97 each coordinate Ni(2+).

The protein belongs to the transcriptional regulatory CopG/NikR family. It depends on Ni(2+) as a cofactor.

In terms of biological role, transcriptional regulator. The sequence is that of Putative nickel-responsive regulator from Desulfovibrio desulfuricans (strain ATCC 27774 / DSM 6949 / MB).